A 130-amino-acid chain; its full sequence is Inner membrane protein YqjF (130 aa).

Residues 1–5 (MKKLE) are Cytoplasmic-facing. Residues 6-26 (DVGVLVARILMPILFITAGWG) traverse the membrane as a helical segment. Residues 27–45 (KITGYAGTQQYMEAMGVPG) lie on the Periplasmic side of the membrane. Residues 46-66 (FMLPLVILLEFGGGLAILFGF) traverse the membrane as a helical segment. Residues 67-70 (LTRT) lie on the Cytoplasmic side of the membrane. The helical transmembrane segment at 71-91 (TALFTAGFTLLTAFLFHSNFA) threads the bilayer. The Periplasmic segment spans residues 92–101 (EGVNSLMFMK). A helical transmembrane segment spans residues 102 to 122 (NLTISGGFLLLAITGPGAYSI). The Cytoplasmic segment spans residues 123 to 130 (DRLLNKKW).

Belongs to the DoxX family.

It localises to the cell inner membrane. This is Inner membrane protein YqjF (yqjF) from Escherichia coli (strain K12).